Reading from the N-terminus, the 185-residue chain is Elongation factor P (185 aa).

Belongs to the elongation factor P family.

It is found in the cytoplasm. Its pathway is protein biosynthesis; polypeptide chain elongation. Functionally, involved in peptide bond synthesis. Stimulates efficient translation and peptide-bond synthesis on native or reconstituted 70S ribosomes in vitro. Probably functions indirectly by altering the affinity of the ribosome for aminoacyl-tRNA, thus increasing their reactivity as acceptors for peptidyl transferase. The polypeptide is Elongation factor P (Salinispora arenicola (strain CNS-205)).